The primary structure comprises 283 residues: Thymidylate synthase (283 aa).

R22 provides a ligand contact to dUMP. Residue C160 is the Nucleophile of the active site. DUMP-binding positions include 180–183 (RSCD), N191, and 221–223 (HIY). D183 is a binding site for (6R)-5,10-methylene-5,6,7,8-tetrahydrofolate. S282 is a (6R)-5,10-methylene-5,6,7,8-tetrahydrofolate binding site.

It belongs to the thymidylate synthase family. Bacterial-type ThyA subfamily. Homodimer.

Its subcellular location is the cytoplasm. It carries out the reaction dUMP + (6R)-5,10-methylene-5,6,7,8-tetrahydrofolate = 7,8-dihydrofolate + dTMP. It functions in the pathway pyrimidine metabolism; dTTP biosynthesis. Its function is as follows. Catalyzes the reductive methylation of 2'-deoxyuridine-5'-monophosphate (dUMP) to 2'-deoxythymidine-5'-monophosphate (dTMP) while utilizing 5,10-methylenetetrahydrofolate (mTHF) as the methyl donor and reductant in the reaction, yielding dihydrofolate (DHF) as a by-product. This enzymatic reaction provides an intracellular de novo source of dTMP, an essential precursor for DNA biosynthesis. The protein is Thymidylate synthase of Shewanella piezotolerans (strain WP3 / JCM 13877).